A 424-amino-acid polypeptide reads, in one-letter code: UDP-N-acetylglucosamine 1-carboxyvinyltransferase (424 aa).

Position 22–23 (lysine 22–asparagine 23) interacts with phosphoenolpyruvate. Arginine 95 lines the UDP-N-acetyl-alpha-D-glucosamine pocket. The active-site Proton donor is cysteine 119. At cysteine 119 the chain carries 2-(S-cysteinyl)pyruvic acid O-phosphothioketal. UDP-N-acetyl-alpha-D-glucosamine-binding positions include arginine 124–glutamine 128, aspartate 311, and isoleucine 333.

Belongs to the EPSP synthase family. MurA subfamily.

The protein localises to the cytoplasm. It carries out the reaction phosphoenolpyruvate + UDP-N-acetyl-alpha-D-glucosamine = UDP-N-acetyl-3-O-(1-carboxyvinyl)-alpha-D-glucosamine + phosphate. It participates in cell wall biogenesis; peptidoglycan biosynthesis. In terms of biological role, cell wall formation. Adds enolpyruvyl to UDP-N-acetylglucosamine. The sequence is that of UDP-N-acetylglucosamine 1-carboxyvinyltransferase from Polaromonas naphthalenivorans (strain CJ2).